Consider the following 391-residue polypeptide: 1-deoxy-D-xylulose 5-phosphate reductoisomerase (391 aa).

NADPH is bound by residues Thr-17, Gly-18, Ser-19, Ile-20, Asn-47, and Asn-130. Lys-131 serves as a coordination point for 1-deoxy-D-xylulose 5-phosphate. Glu-132 is a binding site for NADPH. Mn(2+) is bound at residue Asp-156. 1-deoxy-D-xylulose 5-phosphate contacts are provided by Ser-157, Glu-158, Ser-182, and His-205. Mn(2+) is bound at residue Glu-158. An NADPH-binding site is contributed by Gly-211. Residues Ser-218, Asn-223, Lys-224, and Glu-227 each contribute to the 1-deoxy-D-xylulose 5-phosphate site. A Mn(2+)-binding site is contributed by Glu-227.

This sequence belongs to the DXR family. Mg(2+) serves as cofactor. The cofactor is Mn(2+).

It catalyses the reaction 2-C-methyl-D-erythritol 4-phosphate + NADP(+) = 1-deoxy-D-xylulose 5-phosphate + NADPH + H(+). It participates in isoprenoid biosynthesis; isopentenyl diphosphate biosynthesis via DXP pathway; isopentenyl diphosphate from 1-deoxy-D-xylulose 5-phosphate: step 1/6. In terms of biological role, catalyzes the NADPH-dependent rearrangement and reduction of 1-deoxy-D-xylulose-5-phosphate (DXP) to 2-C-methyl-D-erythritol 4-phosphate (MEP). In Rhizobium meliloti (strain 1021) (Ensifer meliloti), this protein is 1-deoxy-D-xylulose 5-phosphate reductoisomerase.